We begin with the raw amino-acid sequence, 883 residues long: Glutamate receptor 2 (883 aa).

The first 24 residues, 1 to 24 (MQKIMHISVLLSPVLWGLIFGVSS), serve as a signal peptide directing secretion. Over 25–543 (NSIQIGGLFP…GVFSFLDPLA (519 aa)) the chain is Extracellular. An intrachain disulfide couples cysteine 78 to cysteine 330. N-linked (GlcNAc...) asparagine glycans are attached at residues asparagine 256, asparagine 370, asparagine 406, and asparagine 413. 3 residues coordinate L-glutamate: proline 499, threonine 501, and arginine 506. Residues 544-564 (YEIWMCIVFAYIGVSVVLFLV) form a helical membrane-spanning segment. The Cytoplasmic portion of the chain corresponds to 565-591 (SRFSPYEWHTEEFEDGRETQSSESTNE). Positions 592–607 (FGIFNSLWFSLGAFMQ) form an intramembrane region, helical; Pore-forming. Residues 608–610 (QGC) lie within the membrane without spanning it. Cysteine 610 is lipidated: S-palmitoyl cysteine. The Cytoplasmic segment spans residues 611-616 (DISPRS). Residues 617 to 637 (LSGRIVGGVWWFFTLIIISSY) form a helical membrane-spanning segment. Over 638–812 (TANLAAFLTV…EKTSALSLSN (175 aa)) the chain is Extracellular. The L-glutamate site is built by serine 675 and threonine 676. Phosphoserine; by PKC is present on serine 683. Position 717 is a phosphoserine; by PKG (serine 717). Glutamate 726 lines the L-glutamate pocket. The cysteines at positions 739 and 794 are disulfide-linked. The chain crosses the membrane as a helical span at residues 813–833 (VAGVFYILVGGLGLAMLVALI). The Cytoplasmic segment spans residues 834–883 (EFCYKSRAEAKRMKVAKNAQNINPSSSQNSQNFATYKEGYNVYGIESVKI). A lipid anchor (S-palmitoyl cysteine) is attached at cysteine 836. Residues serine 860 and serine 863 each carry the phosphoserine modification. Residues 867 to 877 (ATYKEGYNVYG) form a required for interaction with IQSEC1 region. At tyrosine 876 the chain carries Phosphotyrosine. Serine 880 is modified (phosphoserine).

The protein belongs to the glutamate-gated ion channel (TC 1.A.10.1) family. GRIA2 subfamily. In terms of assembly, homotetramer or heterotetramer of pore-forming glutamate receptor subunits. Tetramers may be formed by the dimerization of dimers. May interact with MPP4. Forms a ternary complex with GRIP1 and CSPG4. Interacts with ATAD1 in an ATP-dependent manner. ATAD1-catalyzed ATP hydrolysis disrupts binding to ATAD1 and to GRIP1 and leads to AMPAR complex disassembly. Interacts with GRIP1 and GRIP2. Interacts with NSF via its C-terminus. Isoform 1, but not isoform 3, interacts with PICK1. Interacts with CACNG2. Interacts with GRIA1 and SYNDIG1. Part of a complex containing GRIA2, NSF and NAPA and/or NAPB. Interacts with SNX27 (via PDZ domain); the interaction is required for recycling to the plasma membrane when endocytosed and prevent degradation in lysosomes. Interacts with LRFN1. Found in a complex with GRIA1, GRIA3, GRIA4, CNIH2, CNIH3, CACNG2, CACNG3, CACNG4, CACNG5, CACNG7 and CACNG8. Interacts with CACNG5. Interacts with OLFM2. Interacts with AP4B1, AP4E1 and AP4M1; probably indirect it mediates the somatodendritic localization of GRIA2 in neurons. Forms a complex with GRIP1, NSG1 and STX12; controls the intracellular fate of AMPAR and the endosomal sorting of the GRIA2 subunit toward recycling and membrane targeting. Interacts with IQSEC1; the interaction is required for ARF6 activation. Interacts (heterotetramer form) with CNIH2 and CNIH3; this interaction promotes expression at the plasma membrane and extensively modulates their gating properties by slowing deactivation and desensitization kinetics. Palmitoylated. Depalmitoylated upon L-glutamate stimulation. Cys-610 palmitoylation leads to Golgi retention and decreased cell surface expression. In contrast, Cys-836 palmitoylation does not affect cell surface expression but regulates stimulation-dependent endocytosis. Post-translationally, ubiquitinated by RNF167, leading to its degradation. In terms of processing, phosphorylation at Tyr-876 is required for interaction with IQSEC1 and ARF6 activation, which in turn triggers AMPAR internalization for persistent synaptic depression. N-glycosylated.

The protein localises to the cell membrane. The protein resides in the postsynaptic cell membrane. It is found in the postsynaptic density membrane. The catalysed reaction is Ca(2+)(in) = Ca(2+)(out). It catalyses the reaction Na(+)(in) = Na(+)(out). Functionally, ionotropic glutamate receptor that functions as a ligand-gated cation channel, gated by L-glutamate and glutamatergic agonists such as alpha-amino-3-hydroxy-5-methyl-4-isoxazolepropionic acid (AMPA), quisqualic acid, and kainic acid. L-glutamate acts as an excitatory neurotransmitter at many synapses in the central nervous system and plays an important role in fast excitatory synaptic transmission. Binding of the excitatory neurotransmitter L-glutamate induces a conformation change, leading to the opening of the cation channel, and thereby converts the chemical signal to an electrical impulse upon entry of monovalent and divalent cations such as sodium and calcium. The receptor then desensitizes rapidly and enters in a transient inactive state, characterized by the presence of bound agonist. In the presence of CACNG4 or CACNG7 or CACNG8, shows resensitization which is characterized by a delayed accumulation of current flux upon continued application of L-glutamate. Through complex formation with NSG1, GRIP1 and STX12 controls the intracellular fate of AMPAR and the endosomal sorting of the GRIA2 subunit toward recycling and membrane targeting. In Homo sapiens (Human), this protein is Glutamate receptor 2.